The following is an 873-amino-acid chain: Serine/threonine-protein phosphatase 4 regulatory subunit 4 (873 aa).

HEAT repeat units lie at residues 213 to 251 (ILPL…TKSV), 252 to 290 (VLPE…RSQT), and 392 to 427 (NFHM…SKLL). The stretch at 686-720 (QKKFYEKDLLDQEKEREELLLLEMEQLEKEKQQND) forms a coiled coil. The segment covering 713–737 (EKEKQQNDGRPMSDKMFEKKRRDTK) has biased composition (basic and acidic residues). The tract at residues 713-766 (EKEKQQNDGRPMSDKMFEKKRRDTKTPTQSLPKNIPISVPGPSSVTPSTSKEIK) is disordered. A compositionally biased stretch (low complexity) spans 747–762 (IPISVPGPSSVTPSTS). The residue at position 775 (serine 775) is a Phosphoserine. Threonine 797 carries the phosphothreonine modification. Over residues 822–858 (TRNASSVPSSFSPNTPLPSTSRGTGNSVDPKSSGSKD) the composition is skewed to polar residues. A disordered region spans residues 822–873 (TRNASSVPSSFSPNTPLPSTSRGTGNSVDPKSSGSKDTQPRKATLKSRKSNP). The segment covering 864–873 (ATLKSRKSNP) has biased composition (basic residues).

In terms of assembly, serine/threonine-protein phosphatase 4 (PP4) occurs in different assemblies of the catalytic and one or more regulatory subunits. Component of the PP4 complex PPP4C-PPP4R4.

Its subcellular location is the cytoplasm. In terms of biological role, putative regulatory subunit of serine/threonine-protein phosphatase 4. This chain is Serine/threonine-protein phosphatase 4 regulatory subunit 4 (PPP4R4), found in Homo sapiens (Human).